The sequence spans 453 residues: UPF0210 protein Mbur_0828 (453 aa).

The protein belongs to the UPF0210 family.

The sequence is that of UPF0210 protein Mbur_0828 from Methanococcoides burtonii (strain DSM 6242 / NBRC 107633 / OCM 468 / ACE-M).